The chain runs to 329 residues: Fructose-1,6-bisphosphatase class 1 2 (329 aa).

Glu-92, Asp-111, Leu-113, and Asp-114 together coordinate Mg(2+). Substrate is bound by residues 114–117 (DGSS) and Asn-206. A Mg(2+)-binding site is contributed by Glu-278.

This sequence belongs to the FBPase class 1 family. Homotetramer. Requires Mg(2+) as cofactor.

The protein resides in the cytoplasm. It carries out the reaction beta-D-fructose 1,6-bisphosphate + H2O = beta-D-fructose 6-phosphate + phosphate. It functions in the pathway carbohydrate biosynthesis; gluconeogenesis. The sequence is that of Fructose-1,6-bisphosphatase class 1 2 from Xanthobacter autotrophicus (strain ATCC BAA-1158 / Py2).